We begin with the raw amino-acid sequence, 327 residues long: Undecaprenyl-phosphate 4-deoxy-4-formamido-L-arabinose transferase (327 aa).

At 1–235 the chain is on the cytoplasmic side; that stretch reads MFDAAPIKKV…TCLTTTPLRL (235 aa). A helical transmembrane segment spans residues 236 to 256; it reads LSLLGSVIAIGGFSLSVLLIV. Residues 257–269 are Periplasmic-facing; it reads LRLALGPQWAAEG. The chain crosses the membrane as a helical span at residues 270 to 290; it reads VFMLFAVLFTFIGAQFIGMGL. At 291–327 the chain is on the cytoplasmic side; that stretch reads LGEYIGRIYNDVRARPRYFVQQVIYPESTSFTEESHQ.

It belongs to the glycosyltransferase 2 family.

The protein resides in the cell inner membrane. It catalyses the reaction UDP-4-deoxy-4-formamido-beta-L-arabinose + di-trans,octa-cis-undecaprenyl phosphate = 4-deoxy-4-formamido-alpha-L-arabinopyranosyl di-trans,octa-cis-undecaprenyl phosphate + UDP. It participates in glycolipid biosynthesis; 4-amino-4-deoxy-alpha-L-arabinose undecaprenyl phosphate biosynthesis; 4-amino-4-deoxy-alpha-L-arabinose undecaprenyl phosphate from UDP-4-deoxy-4-formamido-beta-L-arabinose and undecaprenyl phosphate: step 1/2. The protein operates within bacterial outer membrane biogenesis; lipopolysaccharide biosynthesis. In terms of biological role, catalyzes the transfer of 4-deoxy-4-formamido-L-arabinose from UDP to undecaprenyl phosphate. The modified arabinose is attached to lipid A and is required for resistance to polymyxin and cationic antimicrobial peptides. The polypeptide is Undecaprenyl-phosphate 4-deoxy-4-formamido-L-arabinose transferase (Salmonella newport (strain SL254)).